A 180-amino-acid chain; its full sequence is Alpha-S2-casein-like A (180 aa).

A signal peptide spans 1 to 15 (MRFFVFTCLLAVALA). Residues Ser23 and Ser25 each carry the phosphoserine modification. The tract at residues 46 to 66 (PTNQETPSVSSSEESVEVQTE) is disordered.

Belongs to the alpha-casein family. Mammary gland specific. Secreted in milk.

It is found in the secreted. Functionally, important role in the capacity of milk to transport calcium phosphate. This Oryctolagus cuniculus (Rabbit) protein is Alpha-S2-casein-like A (CSN1S2A).